The sequence spans 460 residues: DL-alanine permease SerP2 (460 aa).

12 consecutive transmembrane segments (helical) span residues 26–46, 47–67, 98–118, 124–144, 160–180, 209–229, 246–266, 278–298, 344–364, 368–388, 410–430, and 433–453; these read LIAI…KSIH, LTGP…YILL, FIQW…LIAI, FWLP…LLTL, FGMI…ILIF, FFES…IGMT, QIPI…MSIY, FVTI…NFVV, ALLF…IPAI, FVFI…MTLI, HIFI…LFCF, and TIIP…FTFF.

The protein belongs to the amino acid-polyamine-organocation (APC) superfamily. Amino acid transporter (AAT) (TC 2.A.3.1) family.

It is found in the cell membrane. Functionally, transports DL-alanine, DL-serine and glycine. The preferred substrate is DL-alanine. L-serine is a low-affinity substrate. This is DL-alanine permease SerP2 from Lactococcus lactis subsp. cremoris (strain MG1363).